The following is a 276-amino-acid chain: Dermonecrotic toxin LspiSicTox-betaIE4ii (276 aa).

His5 is an active-site residue. Glu25 and Asp27 together coordinate Mg(2+). His41 serves as the catalytic Nucleophile. 2 disulfide bridges follow: Cys45–Cys51 and Cys47–Cys189. A Mg(2+)-binding site is contributed by Asp85.

The protein belongs to the arthropod phospholipase D family. Class II subfamily. Mg(2+) serves as cofactor. As to expression, expressed by the venom gland.

The protein localises to the secreted. It carries out the reaction an N-(acyl)-sphingosylphosphocholine = an N-(acyl)-sphingosyl-1,3-cyclic phosphate + choline. The enzyme catalyses an N-(acyl)-sphingosylphosphoethanolamine = an N-(acyl)-sphingosyl-1,3-cyclic phosphate + ethanolamine. The catalysed reaction is a 1-acyl-sn-glycero-3-phosphocholine = a 1-acyl-sn-glycero-2,3-cyclic phosphate + choline. It catalyses the reaction a 1-acyl-sn-glycero-3-phosphoethanolamine = a 1-acyl-sn-glycero-2,3-cyclic phosphate + ethanolamine. Its function is as follows. Dermonecrotic toxins cleave the phosphodiester linkage between the phosphate and headgroup of certain phospholipids (sphingolipid and lysolipid substrates), forming an alcohol (often choline) and a cyclic phosphate. This toxin acts on sphingomyelin (SM). It may also act on ceramide phosphoethanolamine (CPE), lysophosphatidylcholine (LPC) and lysophosphatidylethanolamine (LPE), but not on lysophosphatidylserine (LPS), and lysophosphatidylglycerol (LPG). It acts by transphosphatidylation, releasing exclusively cyclic phosphate products as second products. Induces dermonecrosis, hemolysis, increased vascular permeability, edema, inflammatory response, and platelet aggregation. This is Dermonecrotic toxin LspiSicTox-betaIE4ii from Loxosceles spinulosa (Recluse spider).